Consider the following 637-residue polypeptide: Phosphomethylpyrimidine synthase (637 aa).

Residues Asn-242, Met-271, Tyr-300, His-336, 356–358, 397–400, and Glu-436 each bind substrate; these read SRG and DGLR. His-440 is a binding site for Zn(2+). Tyr-463 contacts substrate. His-504 contacts Zn(2+). The [4Fe-4S] cluster site is built by Cys-584, Cys-587, and Cys-592.

Belongs to the ThiC family. In terms of assembly, homodimer. [4Fe-4S] cluster serves as cofactor.

It catalyses the reaction 5-amino-1-(5-phospho-beta-D-ribosyl)imidazole + S-adenosyl-L-methionine = 4-amino-2-methyl-5-(phosphooxymethyl)pyrimidine + CO + 5'-deoxyadenosine + formate + L-methionine + 3 H(+). It functions in the pathway cofactor biosynthesis; thiamine diphosphate biosynthesis. Functionally, catalyzes the synthesis of the hydroxymethylpyrimidine phosphate (HMP-P) moiety of thiamine from aminoimidazole ribotide (AIR) in a radical S-adenosyl-L-methionine (SAM)-dependent reaction. The protein is Phosphomethylpyrimidine synthase of Bordetella pertussis (strain Tohama I / ATCC BAA-589 / NCTC 13251).